The chain runs to 470 residues: Aspartate-semialdehyde dehydrogenase 1 (470 aa).

Residues threonine 145 and lysine 171 each contribute to the NAD(+) site. Aspartate 243 is a catalytic residue. Glycine 245 contacts NAD(+). The active site involves cysteine 277. Glutamate 371 contributes to the NAD(+) binding site.

This sequence belongs to the aldehyde dehydrogenase family.

It carries out the reaction L-aspartate 4-semialdehyde + NAD(+) + H2O = L-aspartate + NADH + 2 H(+). Dehydrogenase involved in the degradation of canavanine, the delta-oxa-analog of arginine, allowing growth on canavanine as sole nitrogen and carbon source. Probably catalyzes the NAD(+)-dependent oxidation of L-aspartate-semialdehyde to L-aspartate. In Pseudomonas canavaninivorans, this protein is Aspartate-semialdehyde dehydrogenase 1.